We begin with the raw amino-acid sequence, 389 residues long: Chalcone synthase 1 (389 aa).

Cysteine 164 is an active-site residue.

The protein belongs to the thiolase-like superfamily. Chalcone/stilbene synthases family.

It catalyses the reaction (E)-4-coumaroyl-CoA + 3 malonyl-CoA + 3 H(+) = 2',4,4',6'-tetrahydroxychalcone + 3 CO2 + 4 CoA. It participates in secondary metabolite biosynthesis; flavonoid biosynthesis. The primary product of this enzyme is 4,2',4',6'-tetrahydroxychalcone (also termed naringenin-chalcone or chalcone) which can under specific conditions spontaneously isomerize into naringenin. The sequence is that of Chalcone synthase 1 (CHS1) from Medicago sativa (Alfalfa).